We begin with the raw amino-acid sequence, 313 residues long: Zinc transporter ZitB (313 aa).

The Cytoplasmic segment spans residues Met1 to Arg20. A helical transmembrane segment spans residues Leu21–Leu41. Residues Ser42–Leu47 lie on the Periplasmic side of the membrane. The chain crosses the membrane as a helical span at residues Leu48–Val68. Residues Gln69–Leu89 lie on the Cytoplasmic side of the membrane. A helical transmembrane segment spans residues Ala90–Ile110. The Periplasmic segment spans residues Glu111–Gly121. The helical transmembrane segment at Gly122–Leu142 threads the bilayer. The Cytoplasmic segment spans residues His143–His159. A helical transmembrane segment spans residues Val160 to Thr180. A topological domain (periplasmic) is located at residue Gly181. The chain crosses the membrane as a helical span at residues Trp182–Trp202. Residues Arg203–His313 are Cytoplasmic-facing.

Belongs to the cation diffusion facilitator (CDF) transporter (TC 2.A.4) family. SLC30A subfamily.

It localises to the cell inner membrane. Its function is as follows. Involved in zinc efflux across the cytoplasmic membrane, thus reducing zinc accumulation in the cytoplasm and rendering bacteria more resistant to zinc. It may contribute to zinc homeostasis at low concentrations of zinc, whereas ZntA is required for growth at more toxic concentrations. In Escherichia coli (strain K12), this protein is Zinc transporter ZitB (zitB).